Consider the following 142-residue polypeptide: AP-2 complex subunit sigma (142 aa).

It belongs to the adaptor complexes small subunit family. In terms of assembly, adaptor protein complex 2 (AP-2) is a heterotetramer composed of two large adaptins (alpha-type and beta-type subunits), a medium adaptin (mu-type subunit AP50) and a small adaptin (sigma-type subunit AP17).

The protein resides in the cell membrane. The protein localises to the membrane. Its subcellular location is the coated pit. In terms of biological role, component of the adaptor complexes which link clathrin to receptors in coated vesicles. Clathrin-associated protein complexes are believed to interact with the cytoplasmic tails of membrane proteins, leading to their selection and concentration. The sequence is that of AP-2 complex subunit sigma (ap2s1) from Dictyostelium discoideum (Social amoeba).